The following is a 385-amino-acid chain: Prostacyclin receptor (385 aa).

The Extracellular segment spans residues 1–16; it reads MADSCRNLTYVRDSVG. 2 disulfide bridges follow: cysteine 5/cysteine 165 and cysteine 92/cysteine 170. An N-linked (GlcNAc...) asparagine glycan is attached at asparagine 7. The chain crosses the membrane as a helical span at residues 17 to 38; that stretch reads PATSTLMFVAGVVGNGLALGIL. The Cytoplasmic portion of the chain corresponds to 39–51; it reads GARRHSRPSAFAV. Residues 52–76 traverse the membrane as a helical segment; that stretch reads LVTGLGVTDLLGTCFLSPAVFAAYA. The Extracellular segment spans residues 77–94; it reads RNSSLLGLARGRPALCDA. A helical transmembrane segment spans residues 95 to 115; the sequence is FAFAMTFFGLASTLILFAMAV. At 116 to 134 the chain is on the cytoplasmic side; it reads ERCLALSHPYLYAQLDGPR. The helical transmembrane segment at 135-158 threads the bilayer; it reads RARLALPAIYAFCTIFCSLPFLGL. Topologically, residues 159 to 181 are extracellular; that stretch reads GQHQQYCPGSWCFIRMRSAEPGG. Residues 182 to 208 form a helical membrane-spanning segment; it reads CAFLLAYASLVALLVAAIVLCNGSVTL. Residues 209–234 are Cytoplasmic-facing; the sequence is SLCRMYRQQRRHQARCPRPRAGEDEV. Residues 235–259 traverse the membrane as a helical segment; that stretch reads DHLILLALMTGIMAVCSLPLTPQIR. The Extracellular portion of the chain corresponds to 260–273; the sequence is GFTQAIAPDSSEMG. Residues 274–294 form a helical membrane-spanning segment; the sequence is DLLAFRFNAFNPILDPWVFIL. Topologically, residues 295–385 are cytoplasmic; it reads FRKSVFQRLK…AGSEAACSLC (91 aa). A disordered region spans residues 315 to 344; the sequence is AQGDSRTSLSQSASGRKDSSAPPALEGKKG. Residues 318–328 are compositionally biased toward polar residues; sequence DSRTSLSQSAS. A Cysteine methyl ester modification is found at cysteine 382. Cysteine 382 carries the S-farnesyl cysteine lipid modification. The propeptide at 383–385 is removed in mature form; that stretch reads SLC.

This sequence belongs to the G-protein coupled receptor 1 family. As to quaternary structure, interacts (non-isoprenylated C-terminus) with PDZK1. Isoprenylation does not influence ligand binding but is required for efficient coupling to the effectors adenylyl cyclase and phospholipase C.

Its subcellular location is the cell membrane. Its function is as follows. Receptor for prostacyclin (prostaglandin I2 or PGI2). The activity of this receptor is mediated by G(s) proteins which activate adenylate cyclase. This chain is Prostacyclin receptor (PTGIR), found in Bos taurus (Bovine).